A 432-amino-acid chain; its full sequence is Methylenetetrahydrofolate--tRNA-(uracil-5-)-methyltransferase TrmFO (432 aa).

An FAD-binding site is contributed by 7–12 (GGGLAG).

It belongs to the MnmG family. TrmFO subfamily. FAD is required as a cofactor.

Its subcellular location is the cytoplasm. The enzyme catalyses uridine(54) in tRNA + (6R)-5,10-methylene-5,6,7,8-tetrahydrofolate + NADH + H(+) = 5-methyluridine(54) in tRNA + (6S)-5,6,7,8-tetrahydrofolate + NAD(+). It carries out the reaction uridine(54) in tRNA + (6R)-5,10-methylene-5,6,7,8-tetrahydrofolate + NADPH + H(+) = 5-methyluridine(54) in tRNA + (6S)-5,6,7,8-tetrahydrofolate + NADP(+). Catalyzes the folate-dependent formation of 5-methyl-uridine at position 54 (M-5-U54) in all tRNAs. The chain is Methylenetetrahydrofolate--tRNA-(uracil-5-)-methyltransferase TrmFO from Coprothermobacter proteolyticus (strain ATCC 35245 / DSM 5265 / OCM 4 / BT).